The sequence spans 420 residues: Bicoumarin synthase ktnC (420 aa).

Cysteine 362 is a binding site for heme.

It belongs to the cytochrome P450 family. Requires heme as cofactor.

The enzyme catalyses 2 7-demethylsiderin + NADPH + O2 = orlandin + NADP(+) + 2 H2O. It functions in the pathway secondary metabolite biosynthesis. Non-reducing polyketide synthase; part of the gene cluster that mediates the biosynthesis of the bicoumarin kotanin. The non-reducing polyketide synthase ktnS first catalyzes the formation of the pentaketidic 4,7-dihydroxy-5-methylcoumarin from acetyl coenzyme A and 4 malonyl coenzyme A molecules. Further O-methylation by ktnB leads to the formation of 7-demethylsiderin. Then, an oxidative phenol coupling catalyzed by the cytochrome P450 monooxygenase ktnC forms the 8,8'-dimer P-orlandin via dimerization the monomeric precursor, 7-demethylsiderin. P-orlandin is subsequently O-methylated in a stepwise fashion to demethylkotanin and kotanin. The chain is Bicoumarin synthase ktnC from Aspergillus niger (strain ATCC MYA-4892 / CBS 513.88 / FGSC A1513).